Reading from the N-terminus, the 284-residue chain is D-tagatose-1,6-bisphosphate aldolase subunit GatY (284 aa).

The active-site Proton donor is the Asp-82. Positions 83 and 180 each coordinate Zn(2+). Gly-181 serves as a coordination point for dihydroxyacetone phosphate. Zn(2+) is bound at residue His-208. Dihydroxyacetone phosphate-binding positions include 209 to 211 and 230 to 233; these read GAS and NVAT.

Belongs to the class II fructose-bisphosphate aldolase family. TagBP aldolase GatY subfamily. As to quaternary structure, forms a complex with GatZ. The cofactor is Zn(2+).

It catalyses the reaction D-tagatofuranose 1,6-bisphosphate = D-glyceraldehyde 3-phosphate + dihydroxyacetone phosphate. It participates in carbohydrate metabolism; D-tagatose 6-phosphate degradation; D-glyceraldehyde 3-phosphate and glycerone phosphate from D-tagatose 6-phosphate: step 2/2. Functionally, catalytic subunit of the tagatose-1,6-bisphosphate aldolase GatYZ, which catalyzes the reversible aldol condensation of dihydroxyacetone phosphate (DHAP or glycerone-phosphate) with glyceraldehyde 3-phosphate (G3P) to produce tagatose 1,6-bisphosphate (TBP). Requires GatZ subunit for full activity and stability. Is involved in the catabolism of galactitol. The protein is D-tagatose-1,6-bisphosphate aldolase subunit GatY of Salmonella newport (strain SL254).